We begin with the raw amino-acid sequence, 127 residues long: Major sperm protein isoform alpha (127 aa).

At Ala-2 the chain carries N-acetylalanine. The MSP domain maps to 9 to 126; that stretch reads DINTQPSQKI…RRKNLPIEYN (118 aa).

As to quaternary structure, forms filaments 10 nm wide, with a characteristic substructure repeating axially at 9 nm. In terms of tissue distribution, sperm.

It localises to the cell projection. The protein resides in the pseudopodium. The protein localises to the cytoplasm. Its subcellular location is the cytoskeleton. Its function is as follows. Central component in molecular interactions underlying sperm crawling. Forms an extensive filament system that extends from sperm villipoda, along the leading edge of the pseudopod. The sequence is that of Major sperm protein isoform alpha from Ascaris suum (Pig roundworm).